The primary structure comprises 219 residues: Elongation factor Ts (219 aa).

The segment at 82-85 is involved in Mg(2+) ion dislocation from EF-Tu; that stretch reads TDFV.

The protein belongs to the EF-Ts family.

Its subcellular location is the cytoplasm. In terms of biological role, associates with the EF-Tu.GDP complex and induces the exchange of GDP to GTP. It remains bound to the aminoacyl-tRNA.EF-Tu.GTP complex up to the GTP hydrolysis stage on the ribosome. This Anaeromyxobacter dehalogenans (strain 2CP-1 / ATCC BAA-258) protein is Elongation factor Ts.